A 211-amino-acid polypeptide reads, in one-letter code: Probable GTP-binding protein EngB (211 aa).

The 185-residue stretch at 21 to 205 folds into the EngB-type G domain; sequence LMATIVFVGR…KNRIYEIIRE (185 aa). GTP is bound by residues 29–36, 54–58, 71–74, 151–154, and 184–186; these read GRSNVGKS, GVTRK, DMPG, NKLD, and ISA. Positions 36 and 56 each coordinate Mg(2+).

It belongs to the TRAFAC class TrmE-Era-EngA-EngB-Septin-like GTPase superfamily. EngB GTPase family. It depends on Mg(2+) as a cofactor.

Functionally, necessary for normal cell division and for the maintenance of normal septation. This is Probable GTP-binding protein EngB from Pyrococcus abyssi (strain GE5 / Orsay).